Here is a 3790-residue protein sequence, read N- to C-terminus: Transcription-associated protein 1 (3790 aa).

6 HEAT repeats span residues 98–136 (RQHVKTIITMMLKILKTDNEENVLVCLRIIIELHKHFRP), 335–381 (TDLR…HVRQ), 740–778 (DLLYQEFLPLLPNLLEGLNRLQSGFHKQHMRDLFVELCL), 1185–1223 (AKATYEVIHELVRHITSPNTIVREESMVLLKHIGTIQSK), 1332–1370 (IGYKEKIINIIFKVMESDKSELQTTAFHCMKHFITGVTL), and 1826–1864 (AIHKKIVLQVFHSLLKGHALEARSIVKQALDVLTPAMPL). The 564-residue stretch at 2610-3173 (LLAYLGKSHN…YFPIRTLYLT (564 aa)) folds into the FAT domain. The PI3K/PI4K catalytic domain occupies 3429–3753 (MPRVEIVQKN…AVDIIMTRFN (325 aa)). The tract at residues 3435 to 3441 (VQKNNTA) is G-loop. The interval 3616 to 3624 (NLTRLNADM) is catalytic loop. The activation loop stretch occupies residues 3636–3661 (ISYFKFDVNDDKCQLNQHRPVPFRLT). Residues 3758 to 3790 (FDSIENKKISVLVQSATNIDNLCRMDPAWHPWL) enclose the FATC domain.

The protein belongs to the PI3/PI4-kinase family. TRA1 subfamily. In terms of assembly, component of the Tip60 chromatin-remodeling complex which contains the catalytic subunit Tip60 and the subunits Domino, Tra1, Brd8, E(Pc), DMAP1, Pontin, Reptin, Ing3, Act87E, BAP55, Mrg15, MrgBP, Gas41 and YL-1. Probable component of some SAGA complex. Interacts with Spt3, Gcn5, Ada3 and Ada2b. As to expression, ubiquitous.

It is found in the nucleus. The protein resides in the cytoplasm. The protein localises to the chromosome. In terms of biological role, part of the Tip60 chromatin-remodeling complex which is involved in DNA repair. Upon induction of DNA double-strand breaks, this complex acetylates phosphorylated H2AV in nucleosomes and exchanges it with unmodified H2AV. During wing development, required for activity of Notch and its coactivator mam. Function in promoting mam function is likely to involve both the Tip60 and SAGA complexes. This is Transcription-associated protein 1 (Nipped-A) from Drosophila melanogaster (Fruit fly).